We begin with the raw amino-acid sequence, 563 residues long: Autotransporter BimA (563 aa).

The disordered stretch occupies residues 1–20 (MKYRRLSLAHARQDSGQAAS). Residues 1–48 (MKYRRLSLAHARQDSGQAASNARSRRFARLLCSSIAPLALGFSADAFA) form the signal peptide. The interval 61 to 472 (APNDAHGNLL…NLAISNSNAY (412 aa)) is surface exposed passenger domain. A WH2 domain is found at 65 to 82 (AHGNLLDEIRRGVPLRHV). The tract at residues 96–130 (TLADAMRRVIDSRRTAFDSPPATPASPSPSWSDDE) is central and acidic domains. The interval 109–350 (RTAFDSPPAT…PARPGGGQFT (242 aa)) is disordered. 3 stretches are compositionally biased toward low complexity: residues 138-150 (ATRP…SAAR), 162-197 (PASA…STPR), and 211-227 (SPAA…AHSR). Composition is skewed to polar residues over residues 228–238 (GSTQPPSNLST) and 269–281 (SRGS…NLST). The segment at 473-509 (TNQRIGDLQQSITETARDAYSGVAAATALTMIPDVDR) is outer membrane translocation of the passenger domain. A run of 4 beta stranded transmembrane segments spans residues 510 to 519 (DKMLSIGVGG), 525 to 536 (HRAVALGGTARI), 543 to 549 (RAGVAMS), and 553 to 563 (NTVGVGMSWQW). Residues 510-563 (DKMLSIGVGGAVYKGHRAVALGGTARIGENLKVRAGVAMSAGGNTVGVGMSWQW) are translocator domain.

It belongs to the autotransporter-2 (AT-2) (TC 1.B.40) family. Homotrimer. Interacts with host G-actin; the interaction is direct. Interacts (via central and acidic domains) with host ACTR2/ARP2 and ACTR3/ARP3.

It is found in the cell outer membrane. The protein localises to the cell surface. Its function is as follows. During host cell infection, required for actin-based intracellular motility. Mediates actin tail formation at one pole of the bacteria surface by recruiting host Arp2/3 (ACTR3/ARP3-ACTR2/ARP2) which leads to actin polymerization which provides the propulsive force for intracellular movement and intercellular dissemination of the bacterium. The polypeptide is Autotransporter BimA (Burkholderia thailandensis (strain ATCC 700388 / DSM 13276 / CCUG 48851 / CIP 106301 / E264)).